We begin with the raw amino-acid sequence, 175 residues long: Crossover junction endodeoxyribonuclease RuvC (175 aa).

Active-site residues include D16, E76, and D148. Residues D16, E76, and D148 each coordinate Mg(2+).

The protein belongs to the RuvC family. As to quaternary structure, homodimer which binds Holliday junction (HJ) DNA. The HJ becomes 2-fold symmetrical on binding to RuvC with unstacked arms; it has a different conformation from HJ DNA in complex with RuvA. In the full resolvosome a probable DNA-RuvA(4)-RuvB(12)-RuvC(2) complex forms which resolves the HJ. Requires Mg(2+) as cofactor.

Its subcellular location is the cytoplasm. The enzyme catalyses Endonucleolytic cleavage at a junction such as a reciprocal single-stranded crossover between two homologous DNA duplexes (Holliday junction).. Functionally, the RuvA-RuvB-RuvC complex processes Holliday junction (HJ) DNA during genetic recombination and DNA repair. Endonuclease that resolves HJ intermediates. Cleaves cruciform DNA by making single-stranded nicks across the HJ at symmetrical positions within the homologous arms, yielding a 5'-phosphate and a 3'-hydroxyl group; requires a central core of homology in the junction. The consensus cleavage sequence is 5'-(A/T)TT(C/G)-3'. Cleavage occurs on the 3'-side of the TT dinucleotide at the point of strand exchange. HJ branch migration catalyzed by RuvA-RuvB allows RuvC to scan DNA until it finds its consensus sequence, where it cleaves and resolves the cruciform DNA. This is Crossover junction endodeoxyribonuclease RuvC from Bradyrhizobium sp. (strain ORS 278).